A 167-amino-acid polypeptide reads, in one-letter code: Leukotoxin-activating lysine-acyltransferase LktC serotype A1 (167 aa).

Active-site residues include His22 and Asp91.

It belongs to the RTX toxin acyltransferase family.

The protein resides in the cytoplasm. The catalysed reaction is a fatty acyl-[ACP] + L-lysyl-[protein] = N(6)-(fatty acyl)-L-lysyl-[protein] + holo-[ACP] + H(+). Its function is as follows. Involved in fatty acylation of the protoxin (LktA) at two internal lysine residues, thereby converting it to the active toxin. The polypeptide is Leukotoxin-activating lysine-acyltransferase LktC serotype A1 (lktC) (Mannheimia haemolytica (Pasteurella haemolytica)).